The following is a 415-amino-acid chain: Mitochondrial tRNA-specific 2-thiouridylase 1 (415 aa).

Residues 37 to 44 and Met-63 contribute to the ATP site; that span reads AMSGGVDS. Residues 124-126 are interaction with target base in tRNA; the sequence is NPD. Residue Cys-129 is the Nucleophile of the active site. Cys-129 and Cys-234 are disulfide-bonded. Gly-159 lines the ATP pocket. The tract at residues 183-185 is interaction with tRNA; it reads KDQ. Catalysis depends on Cys-234, which acts as the Cysteine persulfide intermediate. An interaction with tRNA region spans residues 356–357; it reads RH.

The protein belongs to the MnmA/TRMU family.

The protein resides in the mitochondrion. It catalyses the reaction 5-taurinomethyluridine(34) in tRNA + S-sulfanyl-L-cysteinyl-[protein] + AH2 + ATP = 5-taurinomethyl-2-thiouridine(34) in tRNA + L-cysteinyl-[protein] + A + AMP + diphosphate + H(+). Catalyzes the 2-thiolation of uridine at the wobble position (U34) of mitochondrial tRNA(Lys), tRNA(Glu) and tRNA(Gln). Required for the formation of 5-taurinomethyl-2-thiouridine (tm5s2U) of mitochondrial tRNA(Lys), tRNA(Glu), and tRNA(Gln) at the wobble position. ATP is required to activate the C2 atom of the wobble base. This is Mitochondrial tRNA-specific 2-thiouridylase 1 from Schizosaccharomyces pombe (strain 972 / ATCC 24843) (Fission yeast).